A 188-amino-acid chain; its full sequence is Pyridoxal 5'-phosphate synthase subunit PdxT (188 aa).

Residue 47–49 (GES) participates in L-glutamine binding. C79 acts as the Nucleophile in catalysis. Residues R105 and 134–135 (IR) each bind L-glutamine. Active-site charge relay system residues include H170 and E172.

It belongs to the glutaminase PdxT/SNO family. In terms of assembly, in the presence of PdxS, forms a dodecamer of heterodimers. Only shows activity in the heterodimer.

The enzyme catalyses aldehydo-D-ribose 5-phosphate + D-glyceraldehyde 3-phosphate + L-glutamine = pyridoxal 5'-phosphate + L-glutamate + phosphate + 3 H2O + H(+). It carries out the reaction L-glutamine + H2O = L-glutamate + NH4(+). Its pathway is cofactor biosynthesis; pyridoxal 5'-phosphate biosynthesis. Its function is as follows. Catalyzes the hydrolysis of glutamine to glutamate and ammonia as part of the biosynthesis of pyridoxal 5'-phosphate. The resulting ammonia molecule is channeled to the active site of PdxS. This Listeria innocua serovar 6a (strain ATCC BAA-680 / CLIP 11262) protein is Pyridoxal 5'-phosphate synthase subunit PdxT.